A 102-amino-acid chain; its full sequence is MACEGAPEVRIGRKPVMNYVLAILTTLMEQGTNQVVVKARGRNINRAVDAVEIVRKRFAKNIEIKDIKIDSQEIEVQTPEGQTRTRRVSSIEICLEKAGESA.

Arginine 10, arginine 13, arginine 40, arginine 42, asparagine 43, arginine 46, and arginine 86 together coordinate DNA.

The protein belongs to the histone-like Alba family. As to quaternary structure, forms homodimers and homotetramers; oligomerization is enhanced and stabilized by DNA. Interacts with Alba 1.

The protein localises to the cytoplasm. Its subcellular location is the chromosome. In terms of biological role, binds double-stranded DNA tightly but without sequence specificity. Involved in DNA compaction. This chain is DNA/RNA-binding protein Alba 2, found in Aeropyrum pernix (strain ATCC 700893 / DSM 11879 / JCM 9820 / NBRC 100138 / K1).